A 331-amino-acid polypeptide reads, in one-letter code: Peroxidase 69 (331 aa).

The signal sequence occupies residues 1–23 (MGRGYNLLFVLVTFLVLVAAVTA). Disulfide bonds link Cys46–Cys122, Cys79–Cys84, Cys128–Cys327, and Cys205–Cys237. The Proton acceptor role is filled by His77. Ca(2+) is bound by residues Asp78, Val81, Gly83, Asp85, and Ser87. The N-linked (GlcNAc...) asparagine glycan is linked to Asn93. Pro168 provides a ligand contact to substrate. His198 is a binding site for heme b. Ca(2+) is bound at residue Thr199. Asn216 carries N-linked (GlcNAc...) asparagine glycosylation. Ca(2+)-binding residues include Asp248, Ser251, and Asp256.

Belongs to the peroxidase family. Classical plant (class III) peroxidase subfamily. Heme b is required as a cofactor. Requires Ca(2+) as cofactor. In terms of tissue distribution, mainly expressed in roots and slightly in leaves.

Its subcellular location is the secreted. The enzyme catalyses 2 a phenolic donor + H2O2 = 2 a phenolic radical donor + 2 H2O. Removal of H(2)O(2), oxidation of toxic reductants, biosynthesis and degradation of lignin, suberization, auxin catabolism, response to environmental stresses such as wounding, pathogen attack and oxidative stress. These functions might be dependent on each isozyme/isoform in each plant tissue. This Arabidopsis thaliana (Mouse-ear cress) protein is Peroxidase 69 (PER69).